The chain runs to 363 residues: MPRYLGLMSGTSLDGMDIVLIEQGDRTTLLASHYLPMPAGLREDILALCVPGPDEIARAAEVEQRWVALAAQGVRELLLQQQMSPDEVRAIGSHGQTIRHEPARHFTVQIGNPALLAELTGIDVVADFRRRDVAAGGQGAPLVPAFHQALFGDDDTSRAVLNIGGFSNVSLLSPGKPVRGFDCGPGNVLMDAWIHHQRGEHFDRDGAWAASGQVNHALLASLLADEFFAARGPKSTGRERFNLPWLQEHLARHPALPAADIQATLLELSARSISESLLDAQPDCEEVLVCGGGAFNTALMKRLAMLMPEARVASTDEYGIPPAWMEGMAFAWLAHRFLERLPGNCPDVTGALGPRTLGALYPA.

10-17 (GTSLDGMD) provides a ligand contact to ATP.

Belongs to the anhydro-N-acetylmuramic acid kinase family.

The enzyme catalyses 1,6-anhydro-N-acetyl-beta-muramate + ATP + H2O = N-acetyl-D-muramate 6-phosphate + ADP + H(+). The protein operates within amino-sugar metabolism; 1,6-anhydro-N-acetylmuramate degradation. It functions in the pathway cell wall biogenesis; peptidoglycan recycling. Its function is as follows. Catalyzes the specific phosphorylation of 1,6-anhydro-N-acetylmuramic acid (anhMurNAc) with the simultaneous cleavage of the 1,6-anhydro ring, generating MurNAc-6-P. Is required for the utilization of anhMurNAc either imported from the medium or derived from its own cell wall murein, and thus plays a role in cell wall recycling. Contributes to intrinsic fosfomycin resistance in P.aeruginosa. The polypeptide is Anhydro-N-acetylmuramic acid kinase (Pseudomonas aeruginosa (strain ATCC 15692 / DSM 22644 / CIP 104116 / JCM 14847 / LMG 12228 / 1C / PRS 101 / PAO1)).